We begin with the raw amino-acid sequence, 284 residues long: Nucleoid occlusion protein (284 aa).

The segment at residues 143-162 is a DNA-binding region (H-T-H motif); that stretch reads EALAQRVGKSQSAIANKMRL.

Belongs to the ParB family.

The protein resides in the cytoplasm. The protein localises to the nucleoid. Functionally, effects nucleoid occlusion by binding relatively nonspecifically to DNA and preventing the assembly of the division machinery in the vicinity of the nucleoid, especially under conditions that disturb the cell cycle. It helps to coordinate cell division and chromosome segregation by preventing the formation of the Z ring through the nucleoid, which would cause chromosome breakage. The chain is Nucleoid occlusion protein from Listeria innocua serovar 6a (strain ATCC BAA-680 / CLIP 11262).